The sequence spans 134 residues: UPF0412 protein YaaI (134 aa).

Residues 1-23 (MKSVITISASLAISLMLCCTAQA) form the signal peptide.

Belongs to the UPF0412 family.

The chain is UPF0412 protein YaaI from Escherichia coli O127:H6 (strain E2348/69 / EPEC).